Consider the following 830-residue polypeptide: Periplasmic nitrate reductase (830 aa).

A signal peptide (tat-type signal) is located at residues 1–31; that stretch reads MKLSRRDFMKANAAVAAAAAAGMTIPTVAKA. One can recognise a 4Fe-4S Mo/W bis-MGD-type domain in the interval 39-95; sequence IKWDKAPCRFCGTGCGVLVGTQNGRIVASQGDPDSPVNRGLNCIKGYFLPKIMYGKD. Residues C46, C49, C53, and C81 each coordinate [4Fe-4S] cluster. Mo-bis(molybdopterin guanine dinucleotide) contacts are provided by residues K83, Q150, N175, C179, 212–219, 243–247, 262–264, M372, Q376, N482, 508–509, K531, D558, and 718–727; these read WGSNMAEM, STYEH, QTD, SD, and TGRVLEHWHT. F794 serves as a coordination point for substrate. Mo-bis(molybdopterin guanine dinucleotide)-binding residues include N802 and K819.

This sequence belongs to the prokaryotic molybdopterin-containing oxidoreductase family. NasA/NapA/NarB subfamily. In terms of assembly, component of the periplasmic nitrate reductase NapAB complex composed of NapA and NapB. Requires [4Fe-4S] cluster as cofactor. Mo-bis(molybdopterin guanine dinucleotide) is required as a cofactor. In terms of processing, predicted to be exported by the Tat system. The position of the signal peptide cleavage has not been experimentally proven.

The protein resides in the periplasm. It carries out the reaction 2 Fe(II)-[cytochrome] + nitrate + 2 H(+) = 2 Fe(III)-[cytochrome] + nitrite + H2O. In terms of biological role, catalytic subunit of the periplasmic nitrate reductase complex NapAB. Receives electrons from NapB and catalyzes the reduction of nitrate to nitrite. This Yersinia pseudotuberculosis serotype IB (strain PB1/+) protein is Periplasmic nitrate reductase.